We begin with the raw amino-acid sequence, 559 residues long: 5-epiaristolochene synthase (559 aa).

The Mg(2+) site is built by D312, D316, D455, T459, and E463. The DDXXD motif motif lies at D312–D316.

The protein belongs to the terpene synthase family. Monomer. Mg(2+) serves as cofactor. In terms of tissue distribution, expressed only in treated leaves an not detected in control leaves.

It is found in the cytoplasm. It carries out the reaction (2E,6E)-farnesyl diphosphate = (+)-5-epi-aristolochene + diphosphate. It participates in secondary metabolite biosynthesis; terpenoid biosynthesis. Functionally, catalyzes the cyclization of trans,trans-farnesyl diphosphate (FPP) to the bicyclic intermediate 5-epi-aristolochene, initial step in the conversion of FPP to the sesquiterpenoid antifungal phytoalexin capsidiol. Produces germacrene A as an enzyme-bound intermediate that is not released by the enzyme, but is further cyclized to produce the bicyclic 5-epi-aristolochene. In Capsicum annuum (Capsicum pepper), this protein is 5-epiaristolochene synthase (EAS).